Reading from the N-terminus, the 61-residue chain is Large ribosomal subunit protein uL29 (61 aa).

This sequence belongs to the universal ribosomal protein uL29 family.

This chain is Large ribosomal subunit protein uL29, found in Campylobacter curvus (strain 525.92).